A 314-amino-acid polypeptide reads, in one-letter code: MSNYPPTVAAQPTTTANPLLQRHQSEQRRRELPKIVETESTSMDITIGQSKQPQFLKSIDELAAFSVAVETFKRQFDDLQKHIESIENAIDSKLESNGVVLAARNNNFHQPMLSPPRNNVSVETTVTVSQPSQEIVPETSNKPEGERICELMCSKGLRKYIYANISDQAKLMEEIPSALKLAKEPAKFVLDCIGKFYLQGRRAFTKESPMSSARQVSLLILESFLLMPDRGKGKVKIESWIKDEAETAAVAWRKRLMTEGGLAAAEKMDARGLLLLVACFGVPSNFRSTDLLDLIRMSGSNEIAGALKRSQFQV.

The span at 1–18 (MSNYPPTVAAQPTTTANP) shows a compositional bias: low complexity. The tract at residues 1–31 (MSNYPPTVAAQPTTTANPLLQRHQSEQRRRE) is disordered. Positions 67 to 97 (VAVETFKRQFDDLQKHIESIENAIDSKLESN) form a coiled coil.

This sequence belongs to the Frigida family.

It is found in the nucleus. The polypeptide is Inactive protein FRIGIDA (FRI) (Arabidopsis thaliana (Mouse-ear cress)).